A 323-amino-acid polypeptide reads, in one-letter code: Chitin-binding lectin 1 (323 aa).

The signal sequence occupies residues 1–22; sequence MKETAISVLALLTLFLLEVVSA. 4-hydroxyproline is present on residues P50, P51, P53, and P55. P50, P51, P53, and P55 each carry an O-linked (Ara...) hydroxyproline glycan. Chitin-binding type-1 domains follow at residues 58 to 101 and 105 to 149; these read YPQC…QCPG and EGRC…QCKL. Disulfide bonds link C61-C77, C70-C83, C76-C90, C95-C99, C108-C125, C117-C131, C124-C138, and C143-C147. Residues S78, W80, W82, and Y89 each coordinate chitin. The interval 150–210 is extensin-like; it reads PSPPPPPPPP…PPPPPPALPY (61 aa). O-linked (Gal) serine glycosylation occurs at S151. 10 repeat units span residues 151-159, 160-164, 165-167, 168-172, 173-180, 181-185, 186-190, 191-192, 193-198, and 200-206. The tract at residues 151–206 is 10 X approximate repeats of S-P-P-P-P; it reads SPPPPPPPPSPPPPSPPSPPPPSPPPPPPPSPPPPSPPPPSPSPPPPPASPPPPPP. 8 positions are modified to 4-hydroxyproline: P152, P153, P154, P155, P156, P157, P158, and P159. O-linked (Ara...) hydroxyproline glycosylation is found at P152, P153, P154, P155, P156, P157, P158, and P159. The tract at residues 154–203 is disordered; the sequence is PPPPPPSPPPPSPPSPPPPSPPPPPPPSPPPPSPPPPSPSPPPPPASPPP. Residue S160 is glycosylated (O-linked (Gal) serine). 4-hydroxyproline occurs at positions 161, 162, 163, and 164. P161, P162, P163, and P164 each carry an O-linked (Ara...) hydroxyproline glycan. An O-linked (Gal) serine glycan is attached at S165. 4-hydroxyproline occurs at positions 166 and 167. O-linked (Ara...) hydroxyproline glycans are attached at residues P166 and P167. Residue S168 is glycosylated (O-linked (Gal) serine). A 4-hydroxyproline mark is found at P169, P170, P171, and P172. O-linked (Ara...) hydroxyproline glycans are attached at residues P169, P170, P171, and P172. S173 is a glycosylation site (O-linked (Gal) serine). Residues P174, P175, P176, P177, P178, P179, and P180 each carry the 4-hydroxyproline modification. O-linked (Ara...) hydroxyproline glycans are attached at residues P174, P175, P176, P177, P178, P179, and P180. O-linked (Gal) serine glycosylation occurs at S181. P182, P183, P184, and P185 each carry 4-hydroxyproline. O-linked (Ara...) hydroxyproline glycosylation is found at P182, P183, P184, and P185. O-linked (Gal) serine glycosylation occurs at S186. 4 positions are modified to 4-hydroxyproline: P187, P188, P189, and P190. P187, P188, P189, and P190 each carry an O-linked (Ara...) hydroxyproline glycan. A glycan (O-linked (Gal) serine) is linked at S191. Position 192 is a 4-hydroxyproline (P192). P192 carries O-linked (Ara...) hydroxyproline glycosylation. Residue S193 is glycosylated (O-linked (Gal) serine). 5 positions are modified to 4-hydroxyproline: P194, P195, P196, P197, and P198. O-linked (Ara...) hydroxyproline glycans are attached at residues P194, P195, P196, P197, and P198. O-linked (Gal) serine glycosylation occurs at S200. 4-hydroxyproline is present on residues P201, P202, P203, P204, P205, P206, and P209. 7 O-linked (Ara...) hydroxyproline glycosylation sites follow: P201, P202, P203, P204, P205, P206, and P209. Chitin-binding type-1 domains follow at residues 210–253 and 257–301; these read YPQC…QCPG and EGRC…QCNT. 8 disulfides stabilise this stretch: C213–C229, C222–C235, C228–C242, C247–C251, C260–C277, C269–C283, C276–C290, and C295–C299. Residues S230, W232, W234, and Y241 each contribute to the chitin site.

It in the central section; belongs to the extensin family. Homodimer. Post-translationally, heavily glycosylated with beta-arabinose on hydroxyprolines and with alpha-galactose on serines of the extensin-like domain. As no other sugars could be detected in the native lectin, it is unlikely that the three putative N-glycosylation sites are actually glycosylated. The N-terminus is blocked. The N-terminal sequences proposed in PubMed:9022287 and PubMed:11056399 originate probably from truncated proteins.

Functionally, this protein might function as a defense against chitin containing pathogens. Binds to several branched or linear N-acetyllactosamine-containing glycosphingolipids and also to lactosylceramide with sphingosine and non-hydroxy fatty acids. The protein is Chitin-binding lectin 1 of Solanum tuberosum (Potato).